The primary structure comprises 361 residues: Phosphoserine aminotransferase (361 aa).

Arg-43 is an L-glutamate binding site. Residues 77–78 (AS), Trp-103, Thr-153, Asp-173, and Gln-196 each bind pyridoxal 5'-phosphate. Lys-197 carries the post-translational modification N6-(pyridoxal phosphate)lysine. 238–239 (NT) contributes to the pyridoxal 5'-phosphate binding site.

This sequence belongs to the class-V pyridoxal-phosphate-dependent aminotransferase family. SerC subfamily. In terms of assembly, homodimer. Pyridoxal 5'-phosphate serves as cofactor.

The protein resides in the cytoplasm. It carries out the reaction O-phospho-L-serine + 2-oxoglutarate = 3-phosphooxypyruvate + L-glutamate. The enzyme catalyses 4-(phosphooxy)-L-threonine + 2-oxoglutarate = (R)-3-hydroxy-2-oxo-4-phosphooxybutanoate + L-glutamate. The protein operates within amino-acid biosynthesis; L-serine biosynthesis; L-serine from 3-phospho-D-glycerate: step 2/3. Its pathway is cofactor biosynthesis; pyridoxine 5'-phosphate biosynthesis; pyridoxine 5'-phosphate from D-erythrose 4-phosphate: step 3/5. In terms of biological role, catalyzes the reversible conversion of 3-phosphohydroxypyruvate to phosphoserine and of 3-hydroxy-2-oxo-4-phosphonooxybutanoate to phosphohydroxythreonine. The sequence is that of Phosphoserine aminotransferase from Stutzerimonas stutzeri (Pseudomonas stutzeri).